We begin with the raw amino-acid sequence, 451 residues long: Probable phosphoglucosamine mutase (451 aa).

Catalysis depends on serine 96, which acts as the Phosphoserine intermediate. Serine 96, aspartate 233, aspartate 235, and aspartate 237 together coordinate Mg(2+). Serine 96 carries the phosphoserine modification.

Belongs to the phosphohexose mutase family. Mg(2+) serves as cofactor. Activated by phosphorylation.

It catalyses the reaction alpha-D-glucosamine 1-phosphate = D-glucosamine 6-phosphate. In terms of biological role, catalyzes the conversion of glucosamine-6-phosphate to glucosamine-1-phosphate. The polypeptide is Probable phosphoglucosamine mutase (Pyrococcus horikoshii (strain ATCC 700860 / DSM 12428 / JCM 9974 / NBRC 100139 / OT-3)).